The following is a 609-amino-acid chain: COP9 signalosome complex subunit 5 (609 aa).

The 141-residue stretch at 75 to 215 (CYISSLALMK…IGAFRTYPEG (141 aa)) folds into the MPN domain. 3 residues coordinate Zn(2+): histidine 161, histidine 163, and aspartate 174. The JAMM motif motif lies at 161-174 (HSHPGYGCWLSGID). Disordered stretches follow at residues 210–248 (RTYPEGSQQQPSMTNKTRKDQNKPHNSGANANRKILPKS) and 381–456 (TTTK…EVDS). The segment covering 214–224 (EGSQQQPSMTN) has biased composition (polar residues). 3 stretches are compositionally biased toward acidic residues: residues 392–404 (TDIDDETMLDESD), 420–431 (SDDDDEEEEGEG), and 445–456 (EVEEGPTDEVDS).

The protein belongs to the peptidase M67A family. CSN5 subfamily. Component of the COP9 signalosome (CSN) complex.

It localises to the cytoplasm. The protein localises to the nucleus. Catalytic Component of the COP9 signalosome (CSN) complex that acts as an regulator of the ubiquitin (Ubl) conjugation pathway by mediating the deneddylation of the cullin subunit of SCF-type E3 ubiquitin-protein ligase complexes. The protein is COP9 signalosome complex subunit 5 (JAB1) of Candida albicans (strain SC5314 / ATCC MYA-2876) (Yeast).